Here is a 268-residue protein sequence, read N- to C-terminus: uncharacterized protein (268 aa).

The N-terminal stretch at 1-18 (MRGFLLLSLGVFSFSALA) is a signal peptide. Domain stretches follow at residues 24–184 (SHDL…ELLP) and 185–268 (SPAT…NWLR). A disulfide bridge links Cys110 with Cys115.

Monomer.

The protein resides in the periplasm. This is an uncharacterized protein from Pseudomonas aeruginosa (strain ATCC 15692 / DSM 22644 / CIP 104116 / JCM 14847 / LMG 12228 / 1C / PRS 101 / PAO1).